The primary structure comprises 570 residues: PTS system lactose-specific EIICB component (570 aa).

The region spanning 9 to 410 (IEKGKPFFEK…VVDIIIYYPF (402 aa)) is the PTS EIIC type-3 domain. 9 consecutive transmembrane segments (helical) span residues 31-51 (GFIS…IAYV), 65-85 (AILM…VAGT), 104-124 (INFI…ASDP), 133-153 (AFMG…TVIV), 178-198 (FKDL…DLVI), 223-243 (GWIG…VGIH), 283-303 (MFIV…MFMW), 340-360 (VFFI…KLFV), and 382-402 (IIMG…LIVV). The region spanning 467 to 570 (QTNVLVLCAG…LDFVQQQFEN (104 aa)) is the PTS EIIB type-3 domain. Residue Cys474 is the Phosphocysteine intermediate; for EIIB activity of the active site. The residue at position 474 (Cys474) is a Phosphocysteine; by EIIA.

It localises to the cell membrane. It catalyses the reaction lactose(out) + N(pros)-phospho-L-histidyl-[protein] = lactose 6-phosphate(in) + L-histidyl-[protein]. The phosphoenolpyruvate-dependent sugar phosphotransferase system (sugar PTS), a major carbohydrate active transport system, catalyzes the phosphorylation of incoming sugar substrates concomitantly with their translocation across the cell membrane. The enzyme II LacEF PTS system is involved in lactose transport. The chain is PTS system lactose-specific EIICB component from Staphylococcus aureus (strain N315).